We begin with the raw amino-acid sequence, 239 residues long: 1-(5-phosphoribosyl)-5-[(5-phosphoribosylamino)methylideneamino] imidazole-4-carboxamide isomerase (239 aa).

Aspartate 7 serves as the catalytic Proton acceptor. The active-site Proton donor is aspartate 129.

It belongs to the HisA/HisF family.

It localises to the cytoplasm. The catalysed reaction is 1-(5-phospho-beta-D-ribosyl)-5-[(5-phospho-beta-D-ribosylamino)methylideneamino]imidazole-4-carboxamide = 5-[(5-phospho-1-deoxy-D-ribulos-1-ylimino)methylamino]-1-(5-phospho-beta-D-ribosyl)imidazole-4-carboxamide. It functions in the pathway amino-acid biosynthesis; L-histidine biosynthesis; L-histidine from 5-phospho-alpha-D-ribose 1-diphosphate: step 4/9. The chain is 1-(5-phosphoribosyl)-5-[(5-phosphoribosylamino)methylideneamino] imidazole-4-carboxamide isomerase from Lactiplantibacillus plantarum (strain ATCC BAA-793 / NCIMB 8826 / WCFS1) (Lactobacillus plantarum).